A 574-amino-acid polypeptide reads, in one-letter code: Intraflagellar transport protein 56 homolog (574 aa).

3 TPR repeats span residues 20–52 (AQKM…GNLD), 57–90 (DSLQ…DDAP), and 151–184 (LEDR…SPNL).

This sequence belongs to the IFT56 family. In terms of assembly, component of the IFT complex B composed of at least che-2, che-13, dyf-1, dyf-3, dyf-6, dyf-11, dyf-13, ift-20, ift-74, ift-81, ifta-2, osm-1, osm-5 and osm-6.

The protein localises to the cell projection. The protein resides in the cilium. In terms of biological role, component of the intraflagellar transport (IFT) complex B required for transport of proteins in the motile cilium. May be required for ciliary entrance and transport of specific ciliary cargo proteins such as che-3 which are related to motility. The protein is Intraflagellar transport protein 56 homolog of Caenorhabditis elegans.